The following is a 428-amino-acid chain: UPF0597 protein BF3560 (428 aa).

The protein belongs to the UPF0597 family.

This Bacteroides fragilis (strain ATCC 25285 / DSM 2151 / CCUG 4856 / JCM 11019 / LMG 10263 / NCTC 9343 / Onslow / VPI 2553 / EN-2) protein is UPF0597 protein BF3560.